Consider the following 35-residue polypeptide: Conotoxin M11.2 (35 aa).

Cystine bridges form between C2/C16, C9/C21, C15/C26, and C20/C33.

It belongs to the conotoxin I1 superfamily. Expressed by the venom duct.

It localises to the secreted. The polypeptide is Conotoxin M11.2 (Conus magus (Magical cone)).